The sequence spans 2549 residues: Serine/threonine-protein kinase mTOR (2549 aa).

Met-1 is subject to N-acetylmethionine. Positions 1–651 (MLGTGPAVAT…HVVSQTAVQV (651 aa)) are interaction with NBN. HEAT repeat units follow at residues 16-53 (SSNVSVLQQFASGLKSRNEETRAKAAKELQHYVTMELR), 55-99 (MSQE…VEGG), 100-137 (NSTRIGRFANYLRNLLPSSDPVVMEMASKAIGRLAMAG), 138-179 (DTFT…AISV), 180-220 (PTFF…LILT), 222-276 (QREP…RISS), 277-313 (MEGERLREEMEEITQQQLVHDKYCKDLMGFGTKPRHI), 314-364 (TPFT…CCRD), 365-409 (LMEE…AFTD), 410-445 (TQYLQDTMNHVLSCVKKEKERTAAFQALGLLSVAVR), 446-494 (SEFK…RAMG), 495-529 (PGIQQDIKELLEPMLAVGLSPALTAVLYDLSRQIP), 530-563 (QLKKDIQDGLLKMLSLVLMHKPLRHPGMPKGLAH), 564-596 (QLASPGLTTLPEASDVASITLALRTLGSFEFEG), 597-636 (HSLTQFVRHCADHFLNSEHKEIRMEAARTCSRLLTPSIHL), 637-683 (ISGH…DERF), 686-724 (HLAQAENLQALFVALNDQVFEIRELAICTVGRLSSMNPA), 727-766 (MPFLRKMLIQILTELEHSGIGRIKEQSARMLGHLVSNAPR), 769-811 (RPYM…VSGL), 814-853 (RKWVDELFIIIMDMLQDSSLLAKRQVALWTLGQLVASTGY), 857-893 (PYRKYPTLLEVLLNFLKTEQNQGTRREAIRVLGLLGA), 894-942 (LDPY…GNLP), 943-988 (LDEF…KCVQ), 989-1027 (FLPQVMPTFLNVIRVCDGAIREFLFQQLGMLVSFVKSHI), 1029-1068 (PYMDEIVTLMREFWVMNTSIQSTIILLIEQIVVALGGEFK), 1069-1105 (LYLPQLIPHMLRVFMHDNSQGRIVSIKLLAAIQLFGA), 1106-1144 (NLDDYLHLLLPPIVKLFDAPEVPLPSRKAALETVDRLTE), 1145-1188 (SLDF…GKKY), 1189-1225 (QIFIPMVNKVLVRHRINHQRYDVLICRIVKGYTLADE), 1226-1273 (EEDP…GAAR), 1274-1311 (RVSKDDWLEWLRRLSLELLKDSSSPSLRSCWALAQAYN), and 1312-1345 (PMARDLFNAAFVSCWSELNEDQQDELIRSIELAL). A Phosphoserine modification is found at Ser-567. A Phosphothreonine modification is found at Thr-1162. The residue at position 1218 (Lys-1218) is an N6-acetyllysine. Ser-1261 carries the post-translational modification Phosphoserine. 16 TPR repeats span residues 1346–1382 (TSQDIAEVTQTLLNLAEFMEHSDKGPLPLRDDNGIVL), 1383–1408 (LGERAAKCRAYAKALHYKELEFQKGP), 1409–1442 (TPAILESLISINNKLQQPEAASGVLEYAMKHFGE), 1443–1473 (LEIQATWYEKLHEWEDALVAYDKKMDTNKED), 1474–1507 (PELMLGRMRCLEALGEWGQLHQQCCEKWTLVNDE), 1508–1541 (TQAKMARMAAAAAWGLGQWDSMEEYTCMIPRDTH), 1542–1574 (DGAFYRAVLALHQDLFSLAQQCIDKARDLLDAE), 1575–1614 (LTAMAGESYSRAYGAMVSCHMLSELEEVIQYKLVPERREI), 1615–1649 (IRQIWWERLQGCQRIVEDWQKILMVRSLVVSPHED), 1650–1693 (MRTW…PTAH), 1694–1731 (PQVTYAYMKNMWKSARKIDAFQHMQHFVQTMQQQAQHA), 1732–1786 (IATE…DRSW), 1787–1846 (YKAW…STEG), 1898–1930 (NNLQDTLRVLTLWFDYGHWPDVNEALVEGVKAI), 1931–1970 (QIDTWLQVIPQLIARIDTPRPLVGRLIHQLLTDIGRYHPQ), and 1971–2005 (ALIYPLTVASKSTTTARHNAANKILKNMCEHSNTL). One can recognise an FAT domain in the interval 1382-1982 (LLGERAAKCR…IYPLTVASKS (601 aa)). Lys-1662, Lys-1702, and Arg-1749 together coordinate 1D-myo-inositol hexakisphosphate. The span at 1825 to 1860 (ITNATTAATTAASAAAATSTEGSNSESEAESNENSP) shows a compositional bias: low complexity. A disordered region spans residues 1825–1867 (ITNATTAATTAASAAAATSTEGSNSESEAESNENSPTPSPLQK). The segment at 2012 to 2144 (VSEELIRVAI…DLELAVPGTY (133 aa)) is sufficient for interaction with the FKBP1A/rapamycin complex. Lys-2066 participates in a covalent cross-link: Glycyl lysine isopeptide (Lys-Gly) (interchain with G-Cter in ubiquitin). The PI3K/PI4K catalytic domain occupies 2156-2469 (IAPSLQVITS…GVELGEPAHK (314 aa)). Ser-2159 carries the post-translational modification Phosphoserine; by TBK1. Residues 2162 to 2168 (VITSKQR) form a G-loop region. Thr-2164 is modified (phosphothreonine). Ser-2165 and Gln-2167 together coordinate ATP. Position 2173 is a phosphothreonine; by PKB/AKT1 (Thr-2173). ATP contacts are provided by Leu-2185, Lys-2187, Glu-2190, Tyr-2225, Gly-2238, Trp-2239, Val-2240, and Thr-2245. The segment at 2258–2296 (KILLNIEHRIMLRMAPDYDHLTLMQKVEVFEHAVNNTAG) is interaction with MLST8. Positions 2335-2343 (GLGDRHPSN) are catalytic loop. Mg(2+) is bound at residue Asn-2343. ATP-binding residues include Met-2345 and Ile-2356. Residues 2355-2380 (HIDFGDCFEVAMTREKFPEKIPFRLT) form an activation loop region. Asp-2357 contributes to the Mg(2+) binding site. Position 2446 is a phosphothreonine; by RPS6KB1 (Thr-2446). Ser-2448 is modified (phosphoserine; by RPS6KB1). Phosphoserine is present on residues Ser-2478 and Ser-2481. An FATC domain is found at 2517–2549 (DTLDVPTQVELLIKQATSHENLCQCYIGWCPFW).

Belongs to the PI3/PI4-kinase family. Part of the mechanistic target of rapamycin complex 1 (mTORC1) which contains MTOR, MLST8 and RPTOR. The mTORC1 complex is a 1 Md obligate dimer of two stoichiometric heterotetramers with overall dimensions of 290 A x 210 A x 135 A. It has a rhomboid shape and a central cavity, the dimeric interfaces are formed by interlocking interactions between the two MTOR and the two RPTOR subunits. The MLST8 subunit forms distal foot-like protuberances, and contacts only one MTOR within the complex, while the small AKT1S1/PRAS40 localizes to the midsection of the central core, in close proximity to RPTOR. mTORC1 associates with AKT1S1/PRAS40, which inhibits its activity by blocking MTOR substrate-recruitment site. Component of the mechanistic target of rapamycin complex 2 (mTORC2), consisting in two heterotretramers composed of MTOR, MLST8, RICTOR and MAPKAP1/SIN1. Interacts with PLPP7 and PML. Interacts with PRR5 and RICTOR; the interaction is direct within the mTORC2 complex and interaction with RICTOR is enhanced by deubiquitination of RICTOR by USP9X. mTORC1 and mTORC2 associate with DEPTOR, which regulates their activity. Interacts with WAC; WAC positively regulates MTOR activity by promoting the assembly of the TTT complex composed of TELO2, TTI1 and TTI2 and the RUVBL complex composed of RUVBL1 and RUVBL2 into the TTT-RUVBL complex which leads to the dimerization of the mTORC1 complex and its subsequent activation. Interacts with UBQLN1. Interacts with TTI1 and TELO2. Interacts with CLIP1; phosphorylates and regulates CLIP1. Interacts with NBN. Interacts with HTR6. Interacts with BRAT1. Interacts with MEAK7 (via C-terminal domain); the interaction increases upon nutrient stimulation. Interacts with TM4SF5; the interaction is positively regulated by arginine and is negatively regulated by leucine. Interacts with GPR137B. Interacts with NCKAP1L. Interacts with TPCN1 and TPCN2; the interaction is required for TPCN1 and TPCN2 sensitivity to ATP. Interacts with ATP6V1A and with CRYAB, forming a ternary complex. Interacts with SLC38A7; this interaction mediates the recruitment of mTORC1 to the lysosome and its subsequent activation. Interacts with TSPAN8. Autophosphorylates when part of mTORC1 or mTORC2. Phosphorylation at Ser-1261, Ser-2159 and Thr-2164 promotes autophosphorylation. Phosphorylated at Ser-2448 by RPS6KB1. Phosphorylation in the kinase domain modulates the interactions of MTOR with RPTOR and AKT1S1/PRAS40 and leads to increased intrinsic mTORC1 kinase activity. Phosphorylation at Ser-2159 by TBK1 in response to growth factors and pathogen recognition receptors promotes mTORC1 activity. Phosphorylation at Ser-2159 by TBK1 in response to EGF growth factor promotes mTORC2 activity, leading to AKT1 phosphorylation and activation. Phosphorylation at Thr-2173 in the ATP-binding region by AKT1 strongly reduces kinase activity. Post-translationally, ubiquitinated at Lys-2066 by the SCF(FBXO22) complex via 'Lys-27'-linked ubiquitination prevents mTORC1 substrate recruitment.

Its subcellular location is the lysosome membrane. The protein resides in the endoplasmic reticulum membrane. It is found in the golgi apparatus membrane. The protein localises to the cell membrane. It localises to the mitochondrion outer membrane. Its subcellular location is the cytoplasm. The protein resides in the nucleus. It is found in the PML body. The protein localises to the microsome membrane. It localises to the cytoplasmic vesicle. Its subcellular location is the phagosome. It carries out the reaction L-seryl-[protein] + ATP = O-phospho-L-seryl-[protein] + ADP + H(+). It catalyses the reaction L-threonyl-[protein] + ATP = O-phospho-L-threonyl-[protein] + ADP + H(+). The catalysed reaction is L-tyrosyl-[protein] + ATP = O-phospho-L-tyrosyl-[protein] + ADP + H(+). With respect to regulation, the mTORC1 complex is activated in response to nutrients, growth factors or amino acids: activation requires relocalization of the mTORC1 complex to lysosomes that is mediated by the Ragulator complex, SLC38A9, and the Rag GTPases RagA/RRAGA, RagB/RRAGB, RagC/RRAGC and RagD/RRAGD. Activation of mTORC1 by growth factors such as insulin involves AKT1-mediated phosphorylation of TSC1-TSC2, which leads to the activation of the RHEB GTPase a potent activator of the protein kinase activity of mTORC1. Insulin-stimulated and amino acid-dependent phosphorylation at Ser-1261 promotes autophosphorylation and the activation of mTORC1. On the other hand, low cellular energy levels can inhibit mTORC1 through activation of PRKAA1 while hypoxia inhibits mTORC1 through a REDD1-dependent mechanism which may also require PRKAA1. The kinase activity of MTOR within the mTORC1 complex is positively regulated by MLST8. The kinase activity of MTOR is inhibited by DEPTOR and AKT1S1. The non-canonical mTORC1 complex is independent of the RHEB GTPase and specifically mediates phosphorylation of MiT/TFE factors TFEB and TFE3 but not other mTORC1 substrates: it is activated by FLCN, which activates Rag GTPases RagC/RRAGC and RagD/RRAGD. MTOR is the target of the immunosuppressive and anti-cancer drug rapamycin which acts in complex with FKBP1A/FKBP12, and specifically inhibits its kinase activity. mTORC2 is also activated by growth factors, but seems to be nutrient-insensitive. mTORC2 associates and is directly activated by ribosomes. mTORC2 may also be regulated by RHEB but in an indirect manner through the PI3K signaling pathway. Its function is as follows. Serine/threonine protein kinase which is a central regulator of cellular metabolism, growth and survival in response to hormones, growth factors, nutrients, energy and stress signals. MTOR directly or indirectly regulates the phosphorylation of at least 800 proteins. Functions as part of 2 structurally and functionally distinct signaling complexes mTORC1 and mTORC2 (mTOR complex 1 and 2). In response to nutrients, growth factors or amino acids, mTORC1 is recruited to the lysosome membrane and promotes protein, lipid and nucleotide synthesis by phosphorylating key regulators of mRNA translation and ribosome synthesis. This includes phosphorylation of EIF4EBP1 and release of its inhibition toward the elongation initiation factor 4E (eiF4E). Moreover, phosphorylates and activates RPS6KB1 and RPS6KB2 that promote protein synthesis by modulating the activity of their downstream targets including ribosomal protein S6, eukaryotic translation initiation factor EIF4B, and the inhibitor of translation initiation PDCD4. Stimulates the pyrimidine biosynthesis pathway, both by acute regulation through RPS6KB1-mediated phosphorylation of the biosynthetic enzyme CAD, and delayed regulation, through transcriptional enhancement of the pentose phosphate pathway which produces 5-phosphoribosyl-1-pyrophosphate (PRPP), an allosteric activator of CAD at a later step in synthesis, this function is dependent on the mTORC1 complex. Regulates ribosome synthesis by activating RNA polymerase III-dependent transcription through phosphorylation and inhibition of MAF1 an RNA polymerase III-repressor. Activates dormant ribosomes by mediating phosphorylation of SERBP1, leading to SERBP1 inactivation and reactivation of translation. In parallel to protein synthesis, also regulates lipid synthesis through SREBF1/SREBP1 and LPIN1. To maintain energy homeostasis mTORC1 may also regulate mitochondrial biogenesis through regulation of PPARGC1A. In the same time, mTORC1 inhibits catabolic pathways: negatively regulates autophagy through phosphorylation of ULK1. Under nutrient sufficiency, phosphorylates ULK1 at 'Ser-758', disrupting the interaction with AMPK and preventing activation of ULK1. Also prevents autophagy through phosphorylation of the autophagy inhibitor DAP. Also prevents autophagy by phosphorylating RUBCNL/Pacer under nutrient-rich conditions. Prevents autophagy by mediating phosphorylation of AMBRA1, thereby inhibiting AMBRA1 ability to mediate ubiquitination of ULK1 and interaction between AMBRA1 and PPP2CA. mTORC1 exerts a feedback control on upstream growth factor signaling that includes phosphorylation and activation of GRB10 a INSR-dependent signaling suppressor. Among other potential targets mTORC1 may phosphorylate CLIP1 and regulate microtubules. The mTORC1 complex is inhibited in response to starvation and amino acid depletion. The non-canonical mTORC1 complex, which acts independently of RHEB, specifically mediates phosphorylation of MiT/TFE factors TFEB and TFE3 in the presence of nutrients, promoting their cytosolic retention and inactivation. Upon starvation or lysosomal stress, inhibition of mTORC1 induces dephosphorylation and nuclear translocation of TFEB and TFE3, promoting their transcription factor activity. The mTORC1 complex regulates pyroptosis in macrophages by promoting GSDMD oligomerization. MTOR phosphorylates RPTOR which in turn inhibits mTORC1. As part of the mTORC2 complex, MTOR transduces signals from growth factors to pathways involved in proliferation, cytoskeletal organization, lipogenesis and anabolic output. In response to growth factors, mTORC2 phosphorylates and activates AGC protein kinase family members, including AKT (AKT1, AKT2 and AKT3), PKC (PRKCA, PRKCB and PRKCE) and SGK1. In contrast to mTORC1, mTORC2 is nutrient-insensitive. mTORC2 plays a critical role in AKT1 activation by mediating phosphorylation of different sites depending on the context, such as 'Thr-450', 'Ser-473', 'Ser-477' or 'Thr-479', facilitating the phosphorylation of the activation loop of AKT1 on 'Thr-308' by PDPK1/PDK1 which is a prerequisite for full activation. mTORC2 also regulates the phosphorylation of SGK1 at 'Ser-422'. mTORC2 may regulate the actin cytoskeleton, through phosphorylation of PRKCA, PXN and activation of the Rho-type guanine nucleotide exchange factors RHOA and RAC1A or RAC1B. The mTORC2 complex also phosphorylates various proteins involved in insulin signaling, such as FBXW8 and IGF2BP1. May also regulate insulin signaling by acting as a tyrosine protein kinase that catalyzes phosphorylation of IGF1R and INSR. Regulates osteoclastogenesis by adjusting the expression of CEBPB isoforms. Plays an important regulatory role in the circadian clock function; regulates period length and rhythm amplitude of the suprachiasmatic nucleus (SCN) and liver clocks. The protein is Serine/threonine-protein kinase mTOR of Mus musculus (Mouse).